The sequence spans 400 residues: S-adenosylmethionine synthase (400 aa).

His15 lines the ATP pocket. Asp17 provides a ligand contact to Mg(2+). Glu43 contacts K(+). The L-methionine site is built by Glu56 and Gln99. The interval 99 to 109 (QSLEIGAGVDT) is flexible loop. Residues 174–176 (DGK), Asp254, 260–261 (RK), Ala277, and Lys281 contribute to the ATP site. Asp254 lines the L-methionine pocket. Lys285 provides a ligand contact to L-methionine.

It belongs to the AdoMet synthase family. In terms of assembly, homotetramer; dimer of dimers. The cofactor is Mg(2+). K(+) is required as a cofactor.

It is found in the cytoplasm. It catalyses the reaction L-methionine + ATP + H2O = S-adenosyl-L-methionine + phosphate + diphosphate. The protein operates within amino-acid biosynthesis; S-adenosyl-L-methionine biosynthesis; S-adenosyl-L-methionine from L-methionine: step 1/1. In terms of biological role, catalyzes the formation of S-adenosylmethionine (AdoMet) from methionine and ATP. The overall synthetic reaction is composed of two sequential steps, AdoMet formation and the subsequent tripolyphosphate hydrolysis which occurs prior to release of AdoMet from the enzyme. The sequence is that of S-adenosylmethionine synthase from Corynebacterium kroppenstedtii (strain DSM 44385 / JCM 11950 / CIP 105744 / CCUG 35717).